Reading from the N-terminus, the 252-residue chain is 2-succinyl-6-hydroxy-2,4-cyclohexadiene-1-carboxylate synthase (252 aa).

It belongs to the AB hydrolase superfamily. MenH family. Monomer.

It catalyses the reaction 5-enolpyruvoyl-6-hydroxy-2-succinyl-cyclohex-3-ene-1-carboxylate = (1R,6R)-6-hydroxy-2-succinyl-cyclohexa-2,4-diene-1-carboxylate + pyruvate. Its pathway is quinol/quinone metabolism; 1,4-dihydroxy-2-naphthoate biosynthesis; 1,4-dihydroxy-2-naphthoate from chorismate: step 3/7. It participates in quinol/quinone metabolism; menaquinone biosynthesis. In terms of biological role, catalyzes a proton abstraction reaction that results in 2,5-elimination of pyruvate from 2-succinyl-5-enolpyruvyl-6-hydroxy-3-cyclohexene-1-carboxylate (SEPHCHC) and the formation of 2-succinyl-6-hydroxy-2,4-cyclohexadiene-1-carboxylate (SHCHC). In Escherichia coli (strain K12 / MC4100 / BW2952), this protein is 2-succinyl-6-hydroxy-2,4-cyclohexadiene-1-carboxylate synthase.